The sequence spans 141 residues: Nucleoside diphosphate kinase (141 aa).

K11, F59, R87, T93, R104, and N114 together coordinate ATP. H117 serves as the catalytic Pros-phosphohistidine intermediate.

It belongs to the NDK family. As to quaternary structure, homotetramer. Mg(2+) is required as a cofactor.

It is found in the cytoplasm. It catalyses the reaction a 2'-deoxyribonucleoside 5'-diphosphate + ATP = a 2'-deoxyribonucleoside 5'-triphosphate + ADP. It carries out the reaction a ribonucleoside 5'-diphosphate + ATP = a ribonucleoside 5'-triphosphate + ADP. Its function is as follows. Major role in the synthesis of nucleoside triphosphates other than ATP. The ATP gamma phosphate is transferred to the NDP beta phosphate via a ping-pong mechanism, using a phosphorylated active-site intermediate. The chain is Nucleoside diphosphate kinase from Nitrosospira multiformis (strain ATCC 25196 / NCIMB 11849 / C 71).